The sequence spans 47 residues: MSLDAASHQPAARRLLDSALVRRVLACMIIVIMIAISIWILTYVLFL.

A helical transmembrane segment spans residues 27–47 (CMIIVIMIAISIWILTYVLFL).

The protein localises to the host membrane. The polypeptide is Protein RL9A (RL9A) (Human cytomegalovirus (strain Merlin) (HHV-5)).